The following is a 70-amino-acid chain: Exodeoxyribonuclease 7 small subunit (70 aa).

It belongs to the XseB family. Heterooligomer composed of large and small subunits.

It is found in the cytoplasm. The catalysed reaction is Exonucleolytic cleavage in either 5'- to 3'- or 3'- to 5'-direction to yield nucleoside 5'-phosphates.. In terms of biological role, bidirectionally degrades single-stranded DNA into large acid-insoluble oligonucleotides, which are then degraded further into small acid-soluble oligonucleotides. The protein is Exodeoxyribonuclease 7 small subunit of Streptococcus sanguinis (strain SK36).